Consider the following 72-residue polypeptide: Translation initiation factor IF-1 (72 aa).

Positions 1–72 constitute an S1-like domain; sequence MAKADVIEVE…TKGRITFRFK (72 aa).

The protein belongs to the IF-1 family. Component of the 30S ribosomal translation pre-initiation complex which assembles on the 30S ribosome in the order IF-2 and IF-3, IF-1 and N-formylmethionyl-tRNA(fMet); mRNA recruitment can occur at any time during PIC assembly.

It is found in the cytoplasm. Its function is as follows. One of the essential components for the initiation of protein synthesis. Stabilizes the binding of IF-2 and IF-3 on the 30S subunit to which N-formylmethionyl-tRNA(fMet) subsequently binds. Helps modulate mRNA selection, yielding the 30S pre-initiation complex (PIC). Upon addition of the 50S ribosomal subunit IF-1, IF-2 and IF-3 are released leaving the mature 70S translation initiation complex. This Limosilactobacillus reuteri (strain DSM 20016) (Lactobacillus reuteri) protein is Translation initiation factor IF-1.